The chain runs to 186 residues: MINRNANRDRDRSRSNDKELKINYRIKAREVRVIFENGTQEVLSIEDAIKKAKEAGLDLVEVSPNVSPPVCKIIDYGKYKFHQEKRQKEQKKNQKVIKLKEVRMQPKIDAHDLDFKSKNILGFLKDGNKVKVTIRFRGRELAHTYLGYGILNSILEKVGDVNYVLESAAKMEGKTMFLIVAPKFKK.

It belongs to the IF-3 family. As to quaternary structure, monomer.

It is found in the cytoplasm. In terms of biological role, IF-3 binds to the 30S ribosomal subunit and shifts the equilibrium between 70S ribosomes and their 50S and 30S subunits in favor of the free subunits, thus enhancing the availability of 30S subunits on which protein synthesis initiation begins. The polypeptide is Translation initiation factor IF-3 (Borreliella burgdorferi (strain ATCC 35210 / DSM 4680 / CIP 102532 / B31) (Borrelia burgdorferi)).